An 851-amino-acid polypeptide reads, in one-letter code: DNA mismatch repair protein MutS (851 aa).

602–609 lines the ATP pocket; the sequence is GPNMSGKS.

The protein belongs to the DNA mismatch repair MutS family.

Functionally, this protein is involved in the repair of mismatches in DNA. It is possible that it carries out the mismatch recognition step. This protein has a weak ATPase activity. This is DNA mismatch repair protein MutS from Streptococcus pyogenes serotype M3 (strain SSI-1).